Here is a 145-residue protein sequence, read N- to C-terminus: Large ribosomal subunit protein uL13 (145 aa).

The protein belongs to the universal ribosomal protein uL13 family. In terms of assembly, part of the 50S ribosomal subunit.

Functionally, this protein is one of the early assembly proteins of the 50S ribosomal subunit, although it is not seen to bind rRNA by itself. It is important during the early stages of 50S assembly. This is Large ribosomal subunit protein uL13 from Listeria innocua serovar 6a (strain ATCC BAA-680 / CLIP 11262).